A 1400-amino-acid polypeptide reads, in one-letter code: DNA topoisomerase 2 (1400 aa).

Low complexity predominate over residues 1 to 30 (MSSFESDSASDAESAFSDASSDFTPSSSVK). A disordered region spans residues 1 to 57 (MSSFESDSASDAESAFSDASSDFTPSSSVKSKGKVPLRDSTNTTAQPSAPATGDASD). Residues 39 to 57 (DSTNTTAQPSAPATGDASD) show a composition bias toward polar residues. ATP is bound by residues N117, N146, 174–176 (SSN), and 187–194 (GRNGYGAK). An interaction with DNA region spans residues 379–386 (TKKEKGKK). Residue 415-417 (QTK) coordinates ATP. The Toprim domain occupies 497 to 613 (CTLILTEGDS…GLLEIPGFLL (117 aa)). The Mg(2+) site is built by E503, D582, and D584. The Topo IIA-type catalytic domain maps to 749–1214 (IPSILDGFKP…SAKDLWNSDL (466 aa)). Y839 acts as the O-(5'-phospho-DNA)-tyrosine intermediate in catalysis. Residues 1019–1028 (KLISSISLSN) are interaction with DNA. The interval 1235–1400 (FGPTAKTSTR…NESDEDYMSE (166 aa)) is disordered. The span at 1262–1271 (SSTPKASTPT) shows a compositional bias: low complexity. Residues 1312–1321 (PKRKTPKSKP) show a composition bias toward basic residues. Over residues 1389 to 1400 (DGNESDEDYMSE) the composition is skewed to acidic residues.

This sequence belongs to the type II topoisomerase family. In terms of assembly, homodimer. Mg(2+) is required as a cofactor. Mn(2+) serves as cofactor. The cofactor is Ca(2+).

Its subcellular location is the nucleus. It catalyses the reaction ATP-dependent breakage, passage and rejoining of double-stranded DNA.. In terms of biological role, control of topological states of DNA by transient breakage and subsequent rejoining of DNA strands. Topoisomerase II makes double-strand breaks. This is DNA topoisomerase 2 (TOP2) from Meyerozyma guilliermondii (strain ATCC 6260 / CBS 566 / DSM 6381 / JCM 1539 / NBRC 10279 / NRRL Y-324) (Yeast).